Reading from the N-terminus, the 413-residue chain is N5-carboxyaminoimidazole ribonucleotide synthase (413 aa).

A disordered region spans residues 1–21 (MKRVSEQAGNPDGNPQAHVPG). Residues Lys-122, Lys-162, 199–202 (EEKV), Glu-207, and 289–290 (NE) contribute to the ATP site. In terms of domain architecture, ATP-grasp spans 126 to 319 (RERLAELGAP…QFEQHLRAVM (194 aa)).

This sequence belongs to the PurK/PurT family. Homodimer.

It catalyses the reaction 5-amino-1-(5-phospho-beta-D-ribosyl)imidazole + hydrogencarbonate + ATP = 5-carboxyamino-1-(5-phospho-D-ribosyl)imidazole + ADP + phosphate + 2 H(+). The protein operates within purine metabolism; IMP biosynthesis via de novo pathway; 5-amino-1-(5-phospho-D-ribosyl)imidazole-4-carboxylate from 5-amino-1-(5-phospho-D-ribosyl)imidazole (N5-CAIR route): step 1/2. Functionally, catalyzes the ATP-dependent conversion of 5-aminoimidazole ribonucleotide (AIR) and HCO(3)(-) to N5-carboxyaminoimidazole ribonucleotide (N5-CAIR). The chain is N5-carboxyaminoimidazole ribonucleotide synthase from Corynebacterium ammoniagenes (Brevibacterium ammoniagenes).